The primary structure comprises 388 residues: Flap endonuclease 1 (388 aa).

The interval 1–104 is N-domain; it reads MGILGLSKLI…GELAKRAERR (104 aa). Aspartate 34 contributes to the Mg(2+) binding site. DNA contacts are provided by arginine 47 and arginine 70. Positions 86, 158, 160, 179, and 181 each coordinate Mg(2+). Residues 122 to 253 form an I-domain region; it reads EIEKFNRRLV…KRAIELIKTY (132 aa). DNA is bound at residue glutamate 158. Residues glycine 231 and aspartate 233 each coordinate DNA. Aspartate 233 contributes to the Mg(2+) binding site. The tract at residues 336–344 is interaction with PCNA; it reads TQVRLDSFF. A disordered region spans residues 351–388; the sequence is PNATAAAKRKAEEIKKSANNKKAKTSGGSGAARGRRPK.

Belongs to the XPG/RAD2 endonuclease family. FEN1 subfamily. In terms of assembly, interacts with PCNA. Three molecules of FEN1 bind to one PCNA trimer with each molecule binding to one PCNA monomer. PCNA stimulates the nuclease activity without altering cleavage specificity. Mg(2+) is required as a cofactor. Phosphorylated. Phosphorylation upon DNA damage induces relocalization to the nuclear plasma.

Its subcellular location is the nucleus. The protein localises to the nucleolus. The protein resides in the nucleoplasm. It is found in the mitochondrion. Structure-specific nuclease with 5'-flap endonuclease and 5'-3' exonuclease activities involved in DNA replication and repair. During DNA replication, cleaves the 5'-overhanging flap structure that is generated by displacement synthesis when DNA polymerase encounters the 5'-end of a downstream Okazaki fragment. It enters the flap from the 5'-end and then tracks to cleave the flap base, leaving a nick for ligation. Also involved in the long patch base excision repair (LP-BER) pathway, by cleaving within the apurinic/apyrimidinic (AP) site-terminated flap. Acts as a genome stabilization factor that prevents flaps from equilibrating into structures that lead to duplications and deletions. Also possesses 5'-3' exonuclease activity on nicked or gapped double-stranded DNA, and exhibits RNase H activity. Also involved in replication and repair of rDNA and in repairing mitochondrial DNA. This chain is Flap endonuclease 1, found in Drosophila mojavensis (Fruit fly).